We begin with the raw amino-acid sequence, 1789 residues long: Mediator of RNA polymerase II transcription subunit 12 (1789 aa).

4 disordered regions span residues 1-138 (MTSR…QRRG), 156-288 (SSPT…GSSA), 1592-1656 (IGTA…GWHA), and 1707-1727 (THLNLGNNSNPPTPSPMNPTR). 2 stretches are compositionally biased toward low complexity: residues 25-66 (SQQR…QQQQ) and 81-98 (TRNNNHNNFSNPNNTLNN). Over residues 107-124 (QDPTSIVSPADPSGSSPA) the composition is skewed to polar residues. Over residues 220–229 (AVPDHSRREQ) the composition is skewed to basic and acidic residues. Low complexity-rich tracts occupy residues 271 to 288 (RSSALATASSSSTTGSSA), 1592 to 1628 (IGTATGTGSPAPGTTPTHTPGVTPGPQNAVGAGSAVS), 1647 to 1656 (QQAQAQGWHA), and 1707 to 1716 (THLNLGNNSN).

Belongs to the Mediator complex subunit 12 family. As to quaternary structure, component of the srb8-11 complex, which itself associates with the Mediator complex.

Its subcellular location is the nucleus. Functionally, component of the srb8-11 complex. The srb8-11 complex is a regulatory module of the Mediator complex which is itself involved in regulation of basal and activated RNA polymerase II-dependent transcription. The srb8-11 complex may be involved in the transcriptional repression of a subset of genes regulated by Mediator. It may inhibit the association of the Mediator complex with RNA polymerase II to form the holoenzyme complex. The polypeptide is Mediator of RNA polymerase II transcription subunit 12 (srb8) (Neurospora crassa (strain ATCC 24698 / 74-OR23-1A / CBS 708.71 / DSM 1257 / FGSC 987)).